A 194-amino-acid polypeptide reads, in one-letter code: Nucleoside triphosphate pyrophosphatase (194 aa).

Residue Asp68 is the Proton acceptor of the active site.

This sequence belongs to the Maf family. It depends on a divalent metal cation as a cofactor.

It is found in the cytoplasm. It carries out the reaction a ribonucleoside 5'-triphosphate + H2O = a ribonucleoside 5'-phosphate + diphosphate + H(+). It catalyses the reaction a 2'-deoxyribonucleoside 5'-triphosphate + H2O = a 2'-deoxyribonucleoside 5'-phosphate + diphosphate + H(+). Functionally, nucleoside triphosphate pyrophosphatase. May have a dual role in cell division arrest and in preventing the incorporation of modified nucleotides into cellular nucleic acids. The sequence is that of Nucleoside triphosphate pyrophosphatase from Corynebacterium jeikeium (strain K411).